A 114-amino-acid polypeptide reads, in one-letter code: Nucleoid-associated protein THEYE_A1069 (114 aa).

This sequence belongs to the YbaB/EbfC family. As to quaternary structure, homodimer.

It localises to the cytoplasm. It is found in the nucleoid. In terms of biological role, binds to DNA and alters its conformation. May be involved in regulation of gene expression, nucleoid organization and DNA protection. The chain is Nucleoid-associated protein THEYE_A1069 from Thermodesulfovibrio yellowstonii (strain ATCC 51303 / DSM 11347 / YP87).